The chain runs to 207 residues: Small ribosomal subunit protein uS4 (207 aa).

An S4 RNA-binding domain is found at 97–160; that stretch reads SRLDNVVYRM…KKQARIVEAL (64 aa).

The protein belongs to the universal ribosomal protein uS4 family. As to quaternary structure, part of the 30S ribosomal subunit. Contacts protein S5. The interaction surface between S4 and S5 is involved in control of translational fidelity.

One of the primary rRNA binding proteins, it binds directly to 16S rRNA where it nucleates assembly of the body of the 30S subunit. Its function is as follows. With S5 and S12 plays an important role in translational accuracy. This chain is Small ribosomal subunit protein uS4, found in Burkholderia pseudomallei (strain 1106a).